The chain runs to 246 residues: uncharacterized protein (246 aa).

Positions 120-149 are disordered; that stretch reads EKCAGETSPYTSASVSNSKKATSSSNFTKS. The span at 130–149 shows a compositional bias: low complexity; the sequence is TSASVSNSKKATSSSNFTKS.

This is an uncharacterized protein from Caenorhabditis elegans.